The primary structure comprises 369 residues: Chromatin modification-related protein EAF3 (369 aa).

One can recognise a Tudor-knot domain in the interval 9–97 (TVYAYHGPLI…WDEWVGIDRI (89 aa)). 2 disordered regions span residues 43–66 (PLEEKPNSSGNHHHHHHSQHIAKF) and 126–191 (IIVN…NKSK). The span at 53–62 (NHHHHHHSQH) shows a compositional bias: basic residues. Low complexity predominate over residues 126–135 (IIVNATTKNH). The segment covering 136 to 149 (TNNKNKKESNKRKS) has biased composition (basic residues). Positions 150–191 (SSATTTSGVTAGTNNNKKQKSASTSTTNNTSGNSGTTSNKSK) are enriched in low complexity. Residues 193–368 (ILSRLNLNFP…TSPQYDSLAR (176 aa)) enclose the MRG domain.

This sequence belongs to the MRG family. As to quaternary structure, component of the NuA4 histone acetyltransferase complex.

It is found in the nucleus. Its function is as follows. Involved in deacetylation of histones, chromatin assembly and chromosome segregation. May act as a transcriptional oscillator, directing histone deacetylases to specific chromosomal domains. Component of the NuA4 histone acetyltransferase complex which is involved in transcriptional activation of selected genes principally by acetylation of nucleosomal histone H4 and H2A. The NuA4 complex is also involved in DNA repair. This Candida albicans (strain SC5314 / ATCC MYA-2876) (Yeast) protein is Chromatin modification-related protein EAF3 (EAF3).